A 1396-amino-acid chain; its full sequence is DNA-directed RNA polymerase subunit beta' (1396 aa).

Residues Cys-71, Cys-73, Cys-86, and Cys-89 each coordinate Zn(2+). Mg(2+)-binding residues include Asp-462, Asp-464, and Asp-466. 4 residues coordinate Zn(2+): Cys-810, Cys-884, Cys-891, and Cys-894. Over residues 1372-1382 the composition is skewed to basic and acidic residues; it reads DEQLAQQREDA. Residues 1372–1396 are disordered; the sequence is DEQLAQQREDAMEPLPAEIALSDAE.

It belongs to the RNA polymerase beta' chain family. In terms of assembly, the RNAP catalytic core consists of 2 alpha, 1 beta, 1 beta' and 1 omega subunit. When a sigma factor is associated with the core the holoenzyme is formed, which can initiate transcription. It depends on Mg(2+) as a cofactor. Zn(2+) is required as a cofactor.

The enzyme catalyses RNA(n) + a ribonucleoside 5'-triphosphate = RNA(n+1) + diphosphate. In terms of biological role, DNA-dependent RNA polymerase catalyzes the transcription of DNA into RNA using the four ribonucleoside triphosphates as substrates. The chain is DNA-directed RNA polymerase subunit beta' from Caulobacter vibrioides (strain ATCC 19089 / CIP 103742 / CB 15) (Caulobacter crescentus).